The following is a 400-amino-acid chain: MFPERVLSGMRPTGALHLGHYHGVLKNWVRLQAEYPCFFFVADWHALTTHYESPEVIEESVWEMLIDWLAAGVDPTQATLFIQSRVPEHAELFLLLSMGTPLGWLERVPTYKDQIEKLKEKDLSTYGFLGYPLLQAADILIYRAGFVPVGEDQVPHVEMTREVARRFNYLYGREPGFEQKALDAAKKLGGKRAKLYLELRTAHQERGEDDALEQARALLAESQSLSMGDRERLFGYLEGARKIILPEPQVLLTEASRMPGLDGQKMSKSYGNTIRMREDKASVEKKVRTMPTDPARVRRTDPGDPGKCPVWQLHQVYSDADTREWVQKGCRSAGIGCLECKQPVIDGILREQQPMLERAQKYMDDPSLLRAIIADGCDTAHKVTQETMREVREAMGLTYS.

Positions 12-20 (PTGALHLGH) match the 'HIGH' region motif. The tract at residues 173-241 (REPGFEQKAL…RLFGYLEGAR (69 aa)) is insert. A 'KMSKS' region motif is present at residues 265–269 (KMSKS). ATP is bound at residue lysine 268. Positions 280–305 (KASVEKKVRTMPTDPARVRRTDPGDP) are disordered. Basic and acidic residues predominate over residues 295–304 (ARVRRTDPGD).

Belongs to the class-I aminoacyl-tRNA synthetase family. As to quaternary structure, homodimer.

It localises to the cytoplasm. It carries out the reaction tRNA(Trp) + L-tryptophan + ATP = L-tryptophyl-tRNA(Trp) + AMP + diphosphate + H(+). The polypeptide is Tryptophan--tRNA ligase (trpS) (Ralstonia nicotianae (strain ATCC BAA-1114 / GMI1000) (Ralstonia solanacearum)).